The following is a 47-amino-acid chain: Large ribosomal subunit protein bL34 (47 aa).

The protein belongs to the bacterial ribosomal protein bL34 family.

The polypeptide is Large ribosomal subunit protein bL34 (Mycobacterium sp. (strain JLS)).